Reading from the N-terminus, the 184-residue chain is Ribosome-recycling factor (184 aa).

Belongs to the RRF family.

It is found in the cytoplasm. Functionally, responsible for the release of ribosomes from messenger RNA at the termination of protein biosynthesis. May increase the efficiency of translation by recycling ribosomes from one round of translation to another. This Leptospira interrogans serogroup Icterohaemorrhagiae serovar copenhageni (strain Fiocruz L1-130) protein is Ribosome-recycling factor.